Consider the following 197-residue polypeptide: Probable GTP-binding protein EngB (197 aa).

Residues 26-197 (ELPEIALAGR…EAWDAILEKL (172 aa)) enclose the EngB-type G domain. GTP contacts are provided by residues 34-41 (GRSNVGKS), 61-65 (GKTQL), 79-82 (DVPG), 146-149 (TKAD), and 178-180 (FSS). Mg(2+) is bound by residues serine 41 and threonine 63.

The protein belongs to the TRAFAC class TrmE-Era-EngA-EngB-Septin-like GTPase superfamily. EngB GTPase family. Requires Mg(2+) as cofactor.

Necessary for normal cell division and for the maintenance of normal septation. This Streptococcus pneumoniae (strain CGSP14) protein is Probable GTP-binding protein EngB.